The chain runs to 397 residues: ATP-dependent RNA helicase eIF4A (397 aa).

A Q motif motif is present at residues 23–51 (YKFDDLNLKPNIVRGIFGYGYETPSAIQQ). The 171-residue stretch at 54–224 (ILPITEGRDV…TKFMNNPVRI (171 aa)) folds into the Helicase ATP-binding domain. 67–74 (AQSGTGKT) is a binding site for ATP. The short motif at 172–175 (DEAD) is the DEAD box element. A Helicase C-terminal domain is found at 255-396 (DLYDSISVTQ…EMPADIGSLF (142 aa)).

It belongs to the DEAD box helicase family. eIF4A subfamily. Component of the eIF4F complex, which composition varies with external and internal environmental conditions. It is composed of at least eIF4A, eIF4E and eIF4G.

Its subcellular location is the cytoplasm. It carries out the reaction ATP + H2O = ADP + phosphate + H(+). Its function is as follows. ATP-dependent RNA helicase which is a subunit of the eIF4F complex involved in cap recognition and is required for mRNA binding to ribosome. In the current model of translation initiation, eIF4A unwinds RNA secondary structures in the 5'-UTR of mRNAs which is necessary to allow efficient binding of the small ribosomal subunit, and subsequent scanning for the initiator codon. In Lodderomyces elongisporus (strain ATCC 11503 / CBS 2605 / JCM 1781 / NBRC 1676 / NRRL YB-4239) (Yeast), this protein is ATP-dependent RNA helicase eIF4A (TIF1).